Reading from the N-terminus, the 947-residue chain is MKQMRLWGFLFLSSFCQVSYLRANDVLLPLSGIHSGEDLELFTLRSSSPTKTTYSLRKDFIVCDFAGNSIHKPGAAFLNLKGDLFFINSTPLAALTFKNIHLGARGAGLFSESNVTFKGLHSLVLENNESWGGVLTTSGDLSFINNTSVLCQNNISYGPGGALLLQGRKSKALFFRDNRGTILFLKNKAVNQDESHPGYGGAVSSISPGSPITFADNQEILFQENEGELGGAIYNDQGAITFENNFQTTSFFSNKASFGGAVYSRYCNLYSQWGDTLFTKNAAAKVGGAIHADYVHIRDCKGSIVFEENSATAGGAIAVNAVCDINAQGPVRFINNSALGLNGGAIYMQATGSILRLHANQGDIEFCGNKVRSQFHSHINSTSNFTNNAITIQGAPREFSLSANEGHRICFYDPIISATENYNSLYINHQRLLEAGGAVIFSGARLSPEHKKENKNKTSIINQPVRLCSGVLSIEGGAILAVRSFYQEGGLLALGPGSKLTTQGKNSEKDKIVITNLGFNLENLDSSDPAEIRATEKASIEISGVPRVYGHTESFYENHEYASKPYTTSIILSAKKLVTAPSRPEKDIQNLIIAESEYMGYGYQGSWEFSWSPNDTKEKKTIIASWTPTGEFSLDPKRRGSFIPTTLWSTFSGLNIASNIVNNNYLNNSEVIPLQHLCVFGGPVYQIMEQNPKQSSNNLLVQHAGHNVGARIPFSFNTILSAALTQLFSSSSQQNVADKSHAQILIGTVSLNKSWQALSLRSSFSYTEDSQVMKHVFPYKGTSRGSWRNYGWSGSVGMSYAYPKGIRYLKMTPFVDLQYTKLVQNPFVETGYDPRYFSSSEMTNLSLPIGIALEMRFIGSRSSLFLQVSTSYIKDLRRVNPQSSASLVLNHYTWDIQGVPLGKEALNITLNSTIKYKIVTAYMGISSTQREGSNLSANAHAGLSLSF.

An N-terminal signal peptide occupies residues 1–19 (MKQMRLWGFLFLSSFCQVS). Residues 672-947 (IPLQHLCVFG…NAHAGLSLSF (276 aa)) enclose the Autotransporter domain.

It belongs to the PMP outer membrane protein family.

Its subcellular location is the secreted. The protein resides in the cell wall. The protein localises to the cell outer membrane. The protein is Probable outer membrane protein pmp19 (pmp19) of Chlamydia pneumoniae (Chlamydophila pneumoniae).